The primary structure comprises 101 residues: Small ribosomal subunit protein uS14 (101 aa).

The protein belongs to the universal ribosomal protein uS14 family. Part of the 30S ribosomal subunit. Contacts proteins S3 and S10.

In terms of biological role, binds 16S rRNA, required for the assembly of 30S particles and may also be responsible for determining the conformation of the 16S rRNA at the A site. The sequence is that of Small ribosomal subunit protein uS14 from Paracoccus denitrificans (strain Pd 1222).